A 213-amino-acid polypeptide reads, in one-letter code: Pyrrolidone-carboxylate peptidase (213 aa).

Active-site residues include E78, C141, and H165.

The protein belongs to the peptidase C15 family. In terms of assembly, homotetramer.

The protein localises to the cytoplasm. It carries out the reaction Release of an N-terminal pyroglutamyl group from a polypeptide, the second amino acid generally not being Pro.. In terms of biological role, removes 5-oxoproline from various penultimate amino acid residues except L-proline. The polypeptide is Pyrrolidone-carboxylate peptidase (Enterococcus faecalis (strain ATCC 700802 / V583)).